The chain runs to 444 residues: U-box domain-containing protein 31 (444 aa).

The U-box domain maps to Glu59 to Leu133. 2 ARM repeats span residues Lys301–Leu340 and Glu343–Lys382.

It catalyses the reaction S-ubiquitinyl-[E2 ubiquitin-conjugating enzyme]-L-cysteine + [acceptor protein]-L-lysine = [E2 ubiquitin-conjugating enzyme]-L-cysteine + N(6)-ubiquitinyl-[acceptor protein]-L-lysine.. It functions in the pathway protein modification; protein ubiquitination. Its function is as follows. Functions as an E3 ubiquitin ligase. The polypeptide is U-box domain-containing protein 31 (PUB31) (Arabidopsis thaliana (Mouse-ear cress)).